The following is a 279-amino-acid chain: Four and a half LIM domains protein 2 (279 aa).

The C4-type zinc finger occupies 7–31 (CHHCEDSLFGRKYVLREEQPYCVAC). 3 LIM zinc-binding domains span residues 40–92 (CEEC…CTDC), 101–153 (CQEC…CVPC), and 162–212 (CVQC…CLGC). Lysine 78 participates in a covalent cross-link: Glycyl lysine isopeptide (Lys-Gly) (interchain with G-Cter in SUMO2). Glycyl lysine isopeptide (Lys-Gly) (interchain with G-Cter in SUMO2) cross-links involve residues lysine 167 and lysine 220. An LIM zinc-binding 4 domain is found at 221–275 (CAGCANPISGLGGTKYISFEERQWHNDCFNCKKCSLSLVGRGFLTERDDILCPDC). Residue serine 238 is modified to Phosphoserine.

As to quaternary structure, interacts with ZNF638 and TTN/titin. Interacts with E4F1. Interacts with GRB7. Interacts with SIRT1 and FOXO1. Interacts with CEFIP and calcineurin. Interacts with FOXK1.

The protein localises to the cytoplasm. It localises to the nucleus. The protein resides in the myofibril. It is found in the sarcomere. Its subcellular location is the z line. May function as a molecular transmitter linking various signaling pathways to transcriptional regulation. Negatively regulates the transcriptional repressor E4F1 and may function in cell growth. Inhibits the transcriptional activity of FOXO1 and its apoptotic function by enhancing the interaction of FOXO1 with SIRT1 and FOXO1 deacetylation. Negatively regulates the calcineurin/NFAT signaling pathway in cardiomyocytes. This chain is Four and a half LIM domains protein 2 (FHL2), found in Bos taurus (Bovine).